We begin with the raw amino-acid sequence, 330 residues long: 2-keto-3-deoxygluconate permease (330 aa).

10 consecutive transmembrane segments (helical) span residues 10–30 (VPGG…TFAP), 42–62 (ALIT…GATI), 77–97 (LLLG…QFIP), 100–120 (GIQS…VMNE), 140–160 (GAFA…TFGV), 163–183 (LAAF…LGCI), 200–220 (PAII…GMLI), 224–244 (LLGI…LFLL), 254–274 (VAGV…YALA), and 289–309 (AIIA…TVWV).

This sequence belongs to the KdgT transporter family.

The protein localises to the cell membrane. It catalyses the reaction 2-dehydro-3-deoxy-D-gluconate(in) + H(+)(in) = 2-dehydro-3-deoxy-D-gluconate(out) + H(+)(out). Catalyzes the proton-dependent uptake of 2-keto-3-deoxygluconate (KDG) into the cell. In Bacillus subtilis (strain 168), this protein is 2-keto-3-deoxygluconate permease.